A 226-amino-acid chain; its full sequence is RNA-binding protein 24 (226 aa).

One can recognise an RRM domain in the interval 11–88; sequence TKIFVGGLPY…RKANVNLAYL (78 aa).

It localises to the nucleus. It is found in the cytoplasm. In terms of biological role, multifunctional RNA-binding protein involved in the regulation of pre-mRNA splicing, mRNA stability and mRNA translation important for cell fate decision and differentiation. Plays a major role in pre-mRNA alternative splicing regulation. Mediates preferentially muscle-specific exon inclusion in numerous mRNAs important for striated cardiac and skeletal muscle cell differentiation. Binds to intronic splicing enhancer (ISE) composed of stretches of GU-rich motifs localized in flanking intron of exon that will be included by alternative splicing. Involved in embryonic stem cell (ESC) transition to cardiac cell differentiation by promoting pre-mRNA alternative splicing events of several pluripotency and/or differentiation genes. Plays a role in the regulation of mRNA stability and mRNA translation to which it is bound. Involved in myogenic differentiation by regulating myog levels. Binds to a huge amount of mRNAs. Required for embryonic heart development, sarcomer and M-band formation in striated muscles. The polypeptide is RNA-binding protein 24 (rbm24) (Xenopus tropicalis (Western clawed frog)).